Consider the following 144-residue polypeptide: Transcription antitermination protein NusB (144 aa).

It belongs to the NusB family.

Its function is as follows. Involved in transcription antitermination. Required for transcription of ribosomal RNA (rRNA) genes. Binds specifically to the boxA antiterminator sequence of the ribosomal RNA (rrn) operons. The protein is Transcription antitermination protein NusB of Paraburkholderia phytofirmans (strain DSM 17436 / LMG 22146 / PsJN) (Burkholderia phytofirmans).